A 34-amino-acid polypeptide reads, in one-letter code: Photosystem II reaction center protein Psb30 (34 aa).

Residues 7–27 (VAQLLALFVIITSGPAIIILI) traverse the membrane as a helical segment.

The protein belongs to the Psb30/Ycf12 family. PSII is composed of 1 copy each of membrane proteins PsbA, PsbB, PsbC, PsbD, PsbE, PsbF, PsbH, PsbI, PsbJ, PsbK, PsbL, PsbM, PsbT, PsbX, PsbY, PsbZ, Psb30/Ycf12, peripheral proteins of the oxygen-evolving complex and a large number of cofactors. It forms dimeric complexes.

It localises to the plastid. The protein localises to the chloroplast thylakoid membrane. In terms of biological role, a core subunit of photosystem II (PSII), probably helps stabilize the reaction center. The sequence is that of Photosystem II reaction center protein Psb30 from Guillardia theta (Cryptophyte).